The chain runs to 248 residues: Sugar fermentation stimulation protein homolog (248 aa).

The protein belongs to the SfsA family.

The polypeptide is Sugar fermentation stimulation protein homolog (Prochlorococcus marinus subsp. pastoris (strain CCMP1986 / NIES-2087 / MED4)).